The following is a 162-amino-acid chain: MDPNVLKNLSLMLSRRAGVSGGEPPRMIEWPEYGQRSEPCGSQTVWYVDRPVGAPFIKAFASEVEERGGGILIHAGKVTFDSAKKLAAMKEVQVFDVKYFSFDLMAVVPEHSLWKRPGDKGYPEKTAQSFPKIMASDPVCRYHGFRPRDLVHVKPHDVYIVC.

This is an uncharacterized protein from Frog virus 3 (isolate Goorha) (FV-3).